We begin with the raw amino-acid sequence, 434 residues long: Enolase (434 aa).

Residue Gln-163 coordinates (2R)-2-phosphoglycerate. Glu-205 serves as the catalytic Proton donor. 3 residues coordinate Mg(2+): Asp-242, Glu-289, and Asp-316. (2R)-2-phosphoglycerate contacts are provided by Lys-341, Arg-370, Ser-371, and Lys-392. Lys-341 serves as the catalytic Proton acceptor.

This sequence belongs to the enolase family. It depends on Mg(2+) as a cofactor.

Its subcellular location is the cytoplasm. It is found in the secreted. The protein localises to the cell surface. It carries out the reaction (2R)-2-phosphoglycerate = phosphoenolpyruvate + H2O. It participates in carbohydrate degradation; glycolysis; pyruvate from D-glyceraldehyde 3-phosphate: step 4/5. In terms of biological role, catalyzes the reversible conversion of 2-phosphoglycerate (2-PG) into phosphoenolpyruvate (PEP). It is essential for the degradation of carbohydrates via glycolysis. The polypeptide is Enolase (Lacticaseibacillus casei (strain BL23) (Lactobacillus casei)).